We begin with the raw amino-acid sequence, 353 residues long: DNA polymerase IV (353 aa).

The region spanning 6–187 (IIHIDCDCFY…LPVTKLHGVG (182 aa)) is the UmuC domain. Mg(2+) contacts are provided by Asp-10 and Asp-105. Glu-106 is an active-site residue.

This sequence belongs to the DNA polymerase type-Y family. Monomer. Mg(2+) is required as a cofactor.

The protein localises to the cytoplasm. The catalysed reaction is DNA(n) + a 2'-deoxyribonucleoside 5'-triphosphate = DNA(n+1) + diphosphate. Its function is as follows. Poorly processive, error-prone DNA polymerase involved in untargeted mutagenesis. Copies undamaged DNA at stalled replication forks, which arise in vivo from mismatched or misaligned primer ends. These misaligned primers can be extended by PolIV. Exhibits no 3'-5' exonuclease (proofreading) activity. May be involved in translesional synthesis, in conjunction with the beta clamp from PolIII. The polypeptide is DNA polymerase IV (Pseudomonas savastanoi pv. phaseolicola (strain 1448A / Race 6) (Pseudomonas syringae pv. phaseolicola (strain 1448A / Race 6))).